A 173-amino-acid chain; its full sequence is Cytidylate kinase (173 aa).

7 to 15 (GLAGTGTST) is an ATP binding site.

It belongs to the cytidylate kinase family. Type 2 subfamily.

It localises to the cytoplasm. It carries out the reaction CMP + ATP = CDP + ADP. It catalyses the reaction dCMP + ATP = dCDP + ADP. The sequence is that of Cytidylate kinase from Methanosphaera stadtmanae (strain ATCC 43021 / DSM 3091 / JCM 11832 / MCB-3).